A 205-amino-acid polypeptide reads, in one-letter code: Allergen Asp f 15 homolog (205 aa).

This sequence belongs to the cerato-platanin family.

It localises to the secreted. The chain is Allergen Asp f 15 homolog from Arthroderma benhamiae (strain ATCC MYA-4681 / CBS 112371) (Trichophyton mentagrophytes).